Here is a 354-residue protein sequence, read N- to C-terminus: Ferrochelatase (354 aa).

Histidine 214 and glutamate 295 together coordinate Fe cation.

It belongs to the ferrochelatase family.

Its subcellular location is the cytoplasm. It catalyses the reaction heme b + 2 H(+) = protoporphyrin IX + Fe(2+). It functions in the pathway porphyrin-containing compound metabolism; protoheme biosynthesis; protoheme from protoporphyrin-IX: step 1/1. Catalyzes the ferrous insertion into protoporphyrin IX. The polypeptide is Ferrochelatase (Burkholderia ambifaria (strain MC40-6)).